The sequence spans 590 residues: Threonine dehydratase biosynthetic, chloroplastic (590 aa).

The N-terminal 44 residues, 1–44 (MLSTSTTNSSILPFRSRASSSTFIARPPANFNSIFTTSVRVFPI), are a transit peptide targeting the chloroplast. At K139 the chain carries N6-(pyridoxal phosphate)lysine. ACT-like domains follow at residues 416 to 488 (ALLG…NISH) and 509 to 580 (EVFV…IDQY).

Belongs to the serine/threonine dehydratase family. Requires pyridoxal 5'-phosphate as cofactor. As to expression, found at higher levels in flowers than in other organs.

It is found in the plastid. Its subcellular location is the chloroplast. The catalysed reaction is L-threonine = 2-oxobutanoate + NH4(+). Its pathway is amino-acid biosynthesis; L-isoleucine biosynthesis; 2-oxobutanoate from L-threonine: step 1/1. With respect to regulation, allosterically inhibited by isoleucine. The polypeptide is Threonine dehydratase biosynthetic, chloroplastic (Cicer arietinum (Chickpea)).